The chain runs to 352 residues: uncharacterized protein (352 aa).

The protein to M.pneumoniae MPN_633 (in the N-terminal section), and M.pneumoniae MPN_634 (in the C-terminal section).

This is an uncharacterized protein from Mycoplasma pneumoniae (strain ATCC 29342 / M129 / Subtype 1) (Mycoplasmoides pneumoniae).